Consider the following 738-residue polypeptide: Wall-associated receptor kinase 4 (738 aa).

The first 22 residues, 1-22, serve as a signal peptide directing secretion; the sequence is MKVQRLFLVAIFCLSYMQLVKG. At 23–335 the chain is on the extracellular side; the sequence is QTLPRCPEKC…PKGNPEYVEW (313 aa). N34, N56, N109, N115, N132, N182, and N208 each carry an N-linked (GlcNAc...) asparagine glycan. Residues 232 to 278 form the EGF-like 1 domain; the sequence is RGETCGQVGEKKCGVNGICSNSASGIGYTCKCKGGFQGNPYLQNGCQ. 6 disulfide bridges follow: C236-C250, C244-C261, C263-C277, C283-C300, C294-C309, and C311-C324. The region spanning 279–325 is the EGF-like 2; calcium-binding domain; it reads DINECTTANPIHKHNCSGDSTCENKLGHFRCNCRSRYELNTTTNTCK. The N-linked (GlcNAc...) asparagine glycan is linked to N293. N-linked (GlcNAc...) asparagine glycosylation occurs at N318. Residues 336-356 traverse the membrane as a helical segment; the sequence is TTIVLGTTIGFLVILLAISCI. At 357–738 the chain is on the cytoplasmic side; sequence EHKMKNTKDT…VAILDIEAGR (382 aa). T399 bears the Phosphothreonine mark. One can recognise a Protein kinase domain in the interval 410-693; it reads YDENRILGQG…RVTKTKHKWS (284 aa). ATP contacts are provided by residues 416 to 424 and K438; that span reads LGQGGQGTV. A Phosphotyrosine modification is found at Y483. Residue D535 is the Proton acceptor of the active site. A phosphothreonine mark is found at T569 and T574. Position 582 is a phosphotyrosine (Y582).

Belongs to the protein kinase superfamily. Ser/Thr protein kinase family. Strictly expressed in siliques.

It is found in the membrane. It carries out the reaction L-seryl-[protein] + ATP = O-phospho-L-seryl-[protein] + ADP + H(+). The enzyme catalyses L-threonyl-[protein] + ATP = O-phospho-L-threonyl-[protein] + ADP + H(+). Its function is as follows. Serine/threonine-protein kinase that may function as a signaling receptor of extracellular matrix component. Binding to pectin may have significance in the control of cell expansion, morphogenesis and development. This Arabidopsis thaliana (Mouse-ear cress) protein is Wall-associated receptor kinase 4 (WAK4).